Consider the following 316-residue polypeptide: D-alanine--D-alanine ligase (316 aa).

Residues 108–310 form the ATP-grasp domain; the sequence is ERYEELSVVK…FDELVDLIIK (203 aa). An ATP-binding site is contributed by 138–193; it reads EEKIGLPCVVKPRKEGSSIGTHICFSKEELLDALKNEFKNYDEMIVQEYIKGKEIT. Residues Asp-265, Glu-277, and Asn-279 each coordinate Mg(2+).

Belongs to the D-alanine--D-alanine ligase family. It depends on Mg(2+) as a cofactor. Requires Mn(2+) as cofactor.

Its subcellular location is the cytoplasm. It carries out the reaction 2 D-alanine + ATP = D-alanyl-D-alanine + ADP + phosphate + H(+). Its pathway is cell wall biogenesis; peptidoglycan biosynthesis. Functionally, cell wall formation. This chain is D-alanine--D-alanine ligase, found in Fervidobacterium nodosum (strain ATCC 35602 / DSM 5306 / Rt17-B1).